The following is a 1152-amino-acid chain: P3N-PIPO polyprotein (1152 aa).

Residues 292–437 (VMNQQTLMAF…HSITHRMVQY (146 aa)) enclose the Peptidase S30 domain. Active-site for P1 proteinase activity residues include histidine 345, aspartate 354, and serine 388. The Involved in interaction with stylet and aphid transmission signature appears at 489–492 (KITC). Residues 747–749 (PTK) carry the Involved in virions binding and aphid transmission motif. The 123-residue stretch at 773–895 (MFVTKDGYCY…ESEMQHYRVG (123 aa)) folds into the Peptidase C6 domain. Catalysis depends on for helper component proteinase activity residues cysteine 781 and histidine 854.

The protein belongs to the potyviridae P3N-PIPO polyprotein family. As to quaternary structure, interacts (via PIPO domain) with host PCaP1 protein; this interaction may help to anchor the movement complex to the plasma membrane from which the complex could move to the plasmodesmata. Post-translationally, potyviral RNA is expressed as two polyproteins which undergo post-translational proteolytic processing. Genome polyprotein is processed by NIa-pro, P1 and HC-pro proteinases resulting in the production of at least ten individual proteins. P3N-PIPO is cleaved by P1 and HC-pro proteinases resulting in the production of three individual proteins. The P1 proteinase and the HC-pro cleave only their respective C-termini autocatalytically.

The protein resides in the host cell junction. Its subcellular location is the host plasmodesma. The enzyme catalyses Hydrolyzes a Gly-|-Gly bond at its own C-terminus, commonly in the sequence -Tyr-Xaa-Val-Gly-|-Gly, in the processing of the potyviral polyprotein.. Its function is as follows. Required for aphid transmission and also has proteolytic activity. Only cleaves a Gly-Gly dipeptide at its own C-terminus. Interacts with virions and aphid stylets. Acts as a suppressor of RNA-mediated gene silencing, also known as post-transcriptional gene silencing (PTGS), a mechanism of plant viral defense that limits the accumulation of viral RNAs. May have RNA-binding activity. In terms of biological role, allows efficient cell to cell propagation, by bypassing the host cell wall barrier. Transports viral genome to neighboring plant cells directly through plasmosdesmata, without any budding. The sequence is that of P3N-PIPO polyprotein from Lettuce mosaic virus (strain 0 / isolate French) (LMV).